Consider the following 311-residue polypeptide: NAD kinase (311 aa).

The active-site Proton acceptor is Asp-88. NAD(+) is bound by residues 88–89, 162–163, Arg-190, Asp-192, Val-200, and 203–208; these read DG, NE, and TAHNLS.

It belongs to the NAD kinase family. Requires a divalent metal cation as cofactor.

It is found in the cytoplasm. The enzyme catalyses NAD(+) + ATP = ADP + NADP(+) + H(+). In terms of biological role, involved in the regulation of the intracellular balance of NAD and NADP, and is a key enzyme in the biosynthesis of NADP. Catalyzes specifically the phosphorylation on 2'-hydroxyl of the adenosine moiety of NAD to yield NADP. The chain is NAD kinase from Rhodopirellula baltica (strain DSM 10527 / NCIMB 13988 / SH1).